A 167-amino-acid polypeptide reads, in one-letter code: Ribosome maturation factor RimM (167 aa).

Residues E94 to L165 form the PRC barrel domain.

This sequence belongs to the RimM family. In terms of assembly, binds ribosomal protein uS19.

It is found in the cytoplasm. Functionally, an accessory protein needed during the final step in the assembly of 30S ribosomal subunit, possibly for assembly of the head region. Essential for efficient processing of 16S rRNA. May be needed both before and after RbfA during the maturation of 16S rRNA. It has affinity for free ribosomal 30S subunits but not for 70S ribosomes. The sequence is that of Ribosome maturation factor RimM from Staphylococcus aureus (strain bovine RF122 / ET3-1).